The sequence spans 121 residues: Urotensin-2 (121 aa).

Positions 1-19 (MSKLVPCLLLLGCLGLLFA) are cleaved as a signal peptide. The propeptide occupies 20 to 106 (LPVPDSRKEP…HLLARIKKPY (87 aa)). The cysteines at positions 115 and 120 are disulfide-linked.

Belongs to the urotensin-2 family.

It is found in the secreted. Its function is as follows. Highly potent vasoconstrictor. The protein is Urotensin-2 (UTS2) of Sus scrofa (Pig).